Reading from the N-terminus, the 682-residue chain is Nisin leader peptide-processing serine protease NisP (682 aa).

The N-terminal stretch at 1-22 (MKKILGFLFIVCSLGLSATVHG) is a signal peptide. Positions 23 to 195 (ETTNSQQLLS…RKAKEVVSLR (173 aa)) are excised as a propeptide. Residues 231–566 (QWDMKYVTNN…VDLLNGKNKA (336 aa)) enclose the Peptidase S8 domain. Residues Asp-259, His-306, and Ser-512 each act as charge relay system in the active site. Positions 652–656 (LPVTG) match the LPXTG sorting signal motif. At Thr-655 the chain carries Pentaglycyl murein peptidoglycan amidated threonine. Positions 656 to 682 (GDGEDFLPALGIVCISILGILKRKTKN) are cleaved as a propeptide — removed by sortase.

It belongs to the peptidase S8 family.

The protein resides in the secreted. Its subcellular location is the cell wall. It participates in antibiotic biosynthesis; nisin biosynthesis. Cleaves the lantibiotic nisin precursor peptide. The polypeptide is Nisin leader peptide-processing serine protease NisP (nisP) (Lactococcus lactis subsp. lactis (Streptococcus lactis)).